A 973-amino-acid polypeptide reads, in one-letter code: Nuclear factor NF-kappa-B p105 subunit (973 aa).

The 208-residue stretch at Ala-38–Asn-245 folds into the RHD domain. At Cys-60 the chain carries S-nitrosocysteine; alternate. A lipid anchor (S-(15-deoxy-Delta12,14-prostaglandin J2-9-yl)cysteine; alternate) is attached at Cys-60. Lys-324 is covalently cross-linked (Glycyl lysine isopeptide (Lys-Gly) (interchain with G-Cter in SUMO2)). Ser-336 is subject to Phosphoserine. The Nuclear localization signal signature appears at Gln-359–Lys-364. The tract at residues Asp-371 to Gly-394 is GRR. The segment at Thr-434–Pro-467 is disordered. The tract at residues Ile-435–Ile-973 is interaction with CFLAR. A compositionally biased stretch (basic and acidic residues) spans Phe-439 to Gln-463. The residue at position 440 (Lys-440) is an N6-acetyllysine. Ser-449 is subject to Phosphoserine. 6 ANK repeats span residues Asn-540 to Asp-570, Leu-579 to Leu-608, Trp-612 to Leu-641, Glu-648 to Ala-677, Ser-682 to Asp-711, and Asp-716 to Val-745. Positions Glu-648 to Ser-682 are essential for interaction with HIF1AN. Asn-676 is modified ((3S)-3-hydroxyasparagine; by HIF1AN). Position 757 is a phosphoserine (Ser-757). Residues Pro-769–Asp-799 form an ANK 7 repeat. The Death domain maps to Gln-803–Phe-890. Phosphoserine is present on Ser-898. Ser-912 is modified (phosphoserine; by GSK3-beta; in vitro). Position 928 is a phosphoserine (Ser-928). Ser-932 and Ser-937 each carry phosphoserine; by IKKB. Ser-942 carries the phosphoserine modification. At Thr-948 the chain carries Phosphothreonine.

In terms of assembly, component of the NF-kappa-B p65-p50 complex. Homodimer; component of the NF-kappa-B p50-p50 complex. Component of the NF-kappa-B p105-p50 complex. Component of the NF-kappa-B p50-c-Rel complex. Component of a complex consisting of the NF-kappa-B p50-p50 homodimer and BCL3. Also interacts with MAP3K8. NF-kappa-B p50 subunit interacts with NCOA3 coactivator, which may coactivate NF-kappa-B dependent expression via its histone acetyltransferase activity. Interacts with TSC22D3; this interaction prevents nuclear translocation and DNA-binding. Interacts with SPAG9 and UNC5CL. NFKB1/p105 interacts with CFLAR; the interaction inhibits p105 processing into p50. NFKB1/p105 forms a ternary complex with MAP3K8 and TNIP2. Interacts with GSK3B; the interaction prevents processing of p105 to p50. NFKB1/p50 interacts with NFKBIE. NFKB1/p50 interacts with NFKBIZ. Nuclear factor NF-kappa-B p50 subunit interacts with NFKBID. Directly interacts with MEN1. Interacts with HIF1AN. Interacts with FEM1A; interaction is direct. Post-translationally, generation of the NF-kappa-B p50 (Nuclear factor NF-kappa-B p50 subunit) transcription factor takes place both cotranslationally and post-translationally via non-mutually exclusive mechanisms. A cotranslational processing allows the production of both p50 and p105 (Nuclear factor NF-kappa-B p105 subunit) from a single NFKB1 mRNA. While translation occurs, the particular unfolded structure after the GRR repeat region acts as a substrate for the proteasome, promoting degradation of the C-terminus. The GRR acts as a proteasomal 'stop signal', protecting the region upstream of the GRR from degradation and promoting generation of p50. It is unclear if limited proteasome degradation during cotranslational processing depends on ubiquitination. NF-kappa-B p50 is also generated post-translationally following ubiquitination by the KPC complex, leading to limited processing by the proteasome downstream of the GRR region, thereby generating p50. In terms of processing, phosphorylation at the C-terminus by IKBKB/IKKB acts as a signal for ubiquitination and promotes either complete degradation or processing to generate the NF-kappa-B p50 (Nuclear factor NF-kappa-B p50 subunit). Phosphorylation at Ser-912 primes p105 for proteolytic processing in response to TNF-alpha stimulation. Phosphorylation at Ser-928, Ser-932 and Ser-937 are required for BTRC/BTRCP-mediated ubiquitination and proteolysis. Phosphorylation at Ser-932 is also required for ubiquitination by the KPC complex and limited processing to generate NF-kappa-B p50 (Nuclear factor NF-kappa-B p50 subunit). Polyubiquitinated at multiple Lys residues in the C-terminus. Polyubiquitinated by the SCF(FBXW11) and SCF(BTRC) complexes following phosphorylation at Ser-928, Ser-932 and Ser-937, leading to its complete degradation. In contrast, polyubiquitination by the KPC complex following phosphorylation at Ser-932 leads to limited proteosomal processing and generation of the active NF-kappa-B p50 (Nuclear factor NF-kappa-B p50 subunit). Post-translationally, S-nitrosylation of Cys-60 affects DNA binding. In terms of processing, the covalent modification of cysteine by 15-deoxy-Delta12,14-prostaglandin-J2 is autocatalytic and reversible. It may occur as an alternative to other cysteine modifications, such as S-nitrosylation and S-palmitoylation.

Its subcellular location is the cytoplasm. It localises to the nucleus. In terms of biological role, NF-kappa-B is a pleiotropic transcription factor present in almost all cell types and is the endpoint of a series of signal transduction events that are initiated by a vast array of stimuli related to many biological processes such as inflammation, immunity, differentiation, cell growth, tumorigenesis and apoptosis. NF-kappa-B is a homo- or heterodimeric complex formed by the Rel-like domain-containing proteins RELA/p65, RELB, NFKB1/p105, NFKB1/p50, REL and NFKB2/p52 and the heterodimeric p65-p50 complex appears to be most abundant one. The dimers bind at kappa-B sites in the DNA of their target genes and the individual dimers have distinct preferences for different kappa-B sites that they can bind with distinguishable affinity and specificity. Different dimer combinations act as transcriptional activators or repressors, respectively. NF-kappa-B is controlled by various mechanisms of post-translational modification and subcellular compartmentalization as well as by interactions with other cofactors or corepressors. NF-kappa-B complexes are held in the cytoplasm in an inactive state complexed with members of the NF-kappa-B inhibitor (I-kappa-B) family. In a conventional activation pathway, I-kappa-B is phosphorylated by I-kappa-B kinases (IKKs) in response to different activators, subsequently degraded thus liberating the active NF-kappa-B complex which translocates to the nucleus. NF-kappa-B heterodimeric p65-p50 and RelB-p50 complexes are transcriptional activators. The NF-kappa-B p50-p50 homodimer is a transcriptional repressor, but can act as a transcriptional activator when associated with BCL3. NFKB1 appears to have dual functions such as cytoplasmic retention of attached NF-kappa-B proteins by p105 and generation of p50 by a cotranslational processing. The proteasome-mediated process ensures the production of both p50 and p105 and preserves their independent function, although processing of NFKB1/p105 also appears to occur post-translationally. p50 binds to the kappa-B consensus sequence 5'-GGRNNYYCC-3', located in the enhancer region of genes involved in immune response and acute phase reactions. In a complex with MAP3K8, NFKB1/p105 represses MAP3K8-induced MAPK signaling; active MAP3K8 is released by proteasome-dependent degradation of NFKB1/p105. P105 is the precursor of the active p50 subunit (Nuclear factor NF-kappa-B p50 subunit) of the nuclear factor NF-kappa-B. Acts as a cytoplasmic retention of attached NF-kappa-B proteins by p105. Functionally, constitutes the active form, which associates with RELA/p65 to form the NF-kappa-B p65-p50 complex to form a transcription factor. Together with RELA/p65, binds to the kappa-B consensus sequence 5'-GGRNNYYCC-3', located in the enhancer region of genes involved in immune response and acute phase reactions. The sequence is that of Nuclear factor NF-kappa-B p105 subunit (Nfkb1) from Rattus norvegicus (Rat).